The chain runs to 116 residues: Large ribosomal subunit protein bL19 (116 aa).

It belongs to the bacterial ribosomal protein bL19 family.

This protein is located at the 30S-50S ribosomal subunit interface and may play a role in the structure and function of the aminoacyl-tRNA binding site. The sequence is that of Large ribosomal subunit protein bL19 from Lactobacillus gasseri (strain ATCC 33323 / DSM 20243 / BCRC 14619 / CIP 102991 / JCM 1131 / KCTC 3163 / NCIMB 11718 / NCTC 13722 / AM63).